The primary structure comprises 1044 residues: Probable translation initiation factor IF-2 (1044 aa).

The DOD-type homing endonuclease domain maps to 173–265 (FAGTIFGREN…LSLILLRLGI (93 aa)). The region spanning 451-668 (TTETHNFIAN…LIAGLSQKYL (218 aa)) is the tr-type G domain. Residues 524 to 528 (DTPGH) and 578 to 581 (NKID) each bind GTP.

Belongs to the TRAFAC class translation factor GTPase superfamily. Classic translation factor GTPase family. IF-2 subfamily. Post-translationally, this protein undergoes a protein self splicing that involves a post-translational excision of the intervening region (intein) followed by peptide ligation.

Functionally, function in general translation initiation by promoting the binding of the formylmethionine-tRNA to ribosomes. Seems to function along with eIF-2. This chain is Probable translation initiation factor IF-2 (infB), found in Pyrococcus horikoshii (strain ATCC 700860 / DSM 12428 / JCM 9974 / NBRC 100139 / OT-3).